The chain runs to 738 residues: NAD(P)H-quinone oxidoreductase subunit 5, chloroplastic (738 aa).

17 helical membrane passes run 9–29, 39–59, 89–109, 125–145, 147–167, 185–205, 219–239, 258–278, 280–300, 327–347, 354–374, 396–416, 425–445, 542–562, 610–630, 691–711, and 717–737; these read WVIP…LFLI, IWAF…LHLS, VDPL…LVLI, FVYI…SNLI, IYFF…FWFT, GDFG…SLEF, NGIN…GAVA, TPIS…FLLA, LLPL…VGTI, LGYM…FHLI, ALLF…VGYS, TTFL…CFWS, WLYS…TAFY, LFPL…GIPF, SLAI…YSFF, GVID…GEEI, and GRIS…LFFI.

This sequence belongs to the complex I subunit 5 family. In terms of assembly, NDH is composed of at least 16 different subunits, 5 of which are encoded in the nucleus.

The protein resides in the plastid. It is found in the chloroplast thylakoid membrane. The catalysed reaction is a plastoquinone + NADH + (n+1) H(+)(in) = a plastoquinol + NAD(+) + n H(+)(out). It carries out the reaction a plastoquinone + NADPH + (n+1) H(+)(in) = a plastoquinol + NADP(+) + n H(+)(out). In terms of biological role, NDH shuttles electrons from NAD(P)H:plastoquinone, via FMN and iron-sulfur (Fe-S) centers, to quinones in the photosynthetic chain and possibly in a chloroplast respiratory chain. The immediate electron acceptor for the enzyme in this species is believed to be plastoquinone. Couples the redox reaction to proton translocation, and thus conserves the redox energy in a proton gradient. This Saccharum officinarum (Sugarcane) protein is NAD(P)H-quinone oxidoreductase subunit 5, chloroplastic (ndhF).